Here is a 347-residue protein sequence, read N- to C-terminus: uncharacterized protein (347 aa).

An RING-type zinc finger spans residues 5 to 44 (CTICHNTPNRPVRLDCNHEFCYICIKGSIQNDMLNCAVCR). One can recognise a WWE domain in the interval 244 to 321 (NVQANFNVAR…NLDAWRQIKR (78 aa)).

This is an uncharacterized protein from Caenorhabditis elegans.